The primary structure comprises 179 residues: Enhancer of split m8 protein (179 aa).

The bHLH domain occupies Y10 to Q65. Residues F83–L116 form the Orange domain. Residues D146–W179 form a disordered region. A WRPW motif motif is present at residues W176–W179.

As to quaternary structure, homodimer. Heterodimers with dpn. Transcription repression requires formation of a complex with a corepressor protein (Groucho).

The protein localises to the nucleus. Its function is as follows. Participates in the control of cell fate choice by uncommitted neuroectodermal cells in the embryo. Transcriptional repressor. Binds DNA on N-box motifs: 5'-CACNAG-3'. Part of the Notch signaling pathway. The sequence is that of Enhancer of split m8 protein from Drosophila melanogaster (Fruit fly).